Reading from the N-terminus, the 291-residue chain is MAPRKRFRLLELGSPTHSKRKVQKPLQEKTPNLRVSPLAFKIGKEIKNKEIRKTKKTESENIFNSKHVDLRLESPHPGLNFVSDAQQYSKAGDVRYLKNKSSNTLKNERQTIERPSFDNSLRFEDIEQPPKSTSTPVLSQSSQINVEREAPMFPVPYYIAPSPMYNFSPYQNFVGNPTFLTPSHNPNLNYAIPIQRPELLYPNVNVYDSPLFKKTRLPHQTKSLDKEKNYQYLPIYPVSISNNGDFVGQETPRAAPKLSKKRLSNTLDVNCSDYESSGQNATYNDSESSLN.

Disordered regions lie at residues 1–30, 116–143, and 271–291; these read MAPR…QEKT, SFDN…QSSQ, and CSDY…SSLN. A Nuclear localization signal motif is present at residues 3 to 6; it reads PRKR. Over residues 116–125 the composition is skewed to basic and acidic residues; sequence SFDNSLRFED. A compositionally biased stretch (polar residues) spans 130–143; the sequence is PKSTSTPVLSQSSQ.

It localises to the nucleus. In terms of biological role, required for meiosis I segmentation. Probably acts as a regulator of kinetochore function during meiosis I: required both for mono-orientation of kinetochores on sister chromosomes and protection of centromeric cohesin from separase-mediated cleavage. The protein is Meiosis-specific protein SPO13 (SPO13) of Saccharomyces cerevisiae (strain ATCC 204508 / S288c) (Baker's yeast).